We begin with the raw amino-acid sequence, 165 residues long: Transcriptional repressor NrdR (165 aa).

A zinc finger spans residues 3–34 (CPFCGAQDTRVVDSRLSHEGDQVRRRRECGEC). The region spanning 49-139 (PRVVKSDGSR…VYRRFEDVNQ (91 aa)) is the ATP-cone domain.

The protein belongs to the NrdR family. Requires Zn(2+) as cofactor.

In terms of biological role, negatively regulates transcription of bacterial ribonucleotide reductase nrd genes and operons by binding to NrdR-boxes. In Methylococcus capsulatus (strain ATCC 33009 / NCIMB 11132 / Bath), this protein is Transcriptional repressor NrdR.